The sequence spans 392 residues: Galactose-1-phosphate uridylyltransferase (392 aa).

2 residues coordinate Zn(2+): Cys52 and Cys55. UDP-alpha-D-glucose-binding positions include Ala61 and 77–78 (ND). His126 contacts Zn(2+). A UDP-alpha-D-glucose-binding site is contributed by Asn194. Residue His205 coordinates Zn(2+). His207 functions as the Tele-UMP-histidine intermediate in the catalytic mechanism. UDP-alpha-D-glucose is bound at residue Gln209. Fe cation contacts are provided by Glu223, His323, His340, and His342. Residues 355 to 358 (KFLV) and 360 to 361 (YE) each bind UDP-alpha-D-glucose.

Belongs to the galactose-1-phosphate uridylyltransferase type 1 family. As to quaternary structure, homodimer. Zn(2+) is required as a cofactor.

The catalysed reaction is alpha-D-galactose 1-phosphate + UDP-alpha-D-glucose = alpha-D-glucose 1-phosphate + UDP-alpha-D-galactose. Its pathway is carbohydrate metabolism; galactose metabolism. The protein is Galactose-1-phosphate uridylyltransferase (gal-7) of Neurospora crassa (strain ATCC 24698 / 74-OR23-1A / CBS 708.71 / DSM 1257 / FGSC 987).